A 469-amino-acid polypeptide reads, in one-letter code: Probable glucuronoxylan glucuronosyltransferase F8H (469 aa).

The Cytoplasmic segment spans residues 1 to 36 (MSLDIKKPNITKTKKKKTGFVVKMQLNNNRGGNKRN). The chain crosses the membrane as a helical; Signal-anchor for type II membrane protein span at residues 37–57 (IFIFFFFRNYYTWILWFCLSL). Residues 58–469 (YFFTSYFSVE…RVLSQREVDM (412 aa)) are Lumenal-facing. Residues Asn171, Asn203, Asn301, and Asn411 are each glycosylated (N-linked (GlcNAc...) asparagine).

Belongs to the glycosyltransferase 47 family. In terms of tissue distribution, expressed in xylem cells in stems and in roots.

The protein resides in the golgi apparatus membrane. Involved in the synthesis of the hemicellulose glucuronoxylan, a major component of secondary cell walls. Probably involved in the synthesis of the glycosyl sequence at the glucuronoxylan reducing end. This Arabidopsis thaliana (Mouse-ear cress) protein is Probable glucuronoxylan glucuronosyltransferase F8H (F8H).